The chain runs to 214 residues: Leucyl/phenylalanyl-tRNA--protein transferase (214 aa).

Belongs to the L/F-transferase family.

It is found in the cytoplasm. The catalysed reaction is N-terminal L-lysyl-[protein] + L-leucyl-tRNA(Leu) = N-terminal L-leucyl-L-lysyl-[protein] + tRNA(Leu) + H(+). It carries out the reaction N-terminal L-arginyl-[protein] + L-leucyl-tRNA(Leu) = N-terminal L-leucyl-L-arginyl-[protein] + tRNA(Leu) + H(+). The enzyme catalyses L-phenylalanyl-tRNA(Phe) + an N-terminal L-alpha-aminoacyl-[protein] = an N-terminal L-phenylalanyl-L-alpha-aminoacyl-[protein] + tRNA(Phe). Functionally, functions in the N-end rule pathway of protein degradation where it conjugates Leu, Phe and, less efficiently, Met from aminoacyl-tRNAs to the N-termini of proteins containing an N-terminal arginine or lysine. The chain is Leucyl/phenylalanyl-tRNA--protein transferase from Cereibacter sphaeroides (strain ATCC 17023 / DSM 158 / JCM 6121 / CCUG 31486 / LMG 2827 / NBRC 12203 / NCIMB 8253 / ATH 2.4.1.) (Rhodobacter sphaeroides).